A 146-amino-acid chain; its full sequence is Protein U1 (146 aa).

Belongs to the nanovirus U1 protein family.

The protein is Protein U1 (DNA-U1) of Subterranean clover stunt virus (strain F) (SCSV).